A 422-amino-acid polypeptide reads, in one-letter code: UDP-N-acetylglucosamine 1-carboxyvinyltransferase (422 aa).

22–23 (KN) lines the phosphoenolpyruvate pocket. Arg92 is a binding site for UDP-N-acetyl-alpha-D-glucosamine. The Proton donor role is filled by Cys116. Residue Cys116 is modified to 2-(S-cysteinyl)pyruvic acid O-phosphothioketal. UDP-N-acetyl-alpha-D-glucosamine contacts are provided by residues 121–125 (RPVDQ), Asp305, and Ile327.

It belongs to the EPSP synthase family. MurA subfamily.

It localises to the cytoplasm. The enzyme catalyses phosphoenolpyruvate + UDP-N-acetyl-alpha-D-glucosamine = UDP-N-acetyl-3-O-(1-carboxyvinyl)-alpha-D-glucosamine + phosphate. The protein operates within cell wall biogenesis; peptidoglycan biosynthesis. Its function is as follows. Cell wall formation. Adds enolpyruvyl to UDP-N-acetylglucosamine. This is UDP-N-acetylglucosamine 1-carboxyvinyltransferase from Sorangium cellulosum (strain So ce56) (Polyangium cellulosum (strain So ce56)).